We begin with the raw amino-acid sequence, 287 residues long: Bifunctional protein FolD (287 aa).

NADP(+)-binding positions include 164-166 (GSS), S189, and I230.

It belongs to the tetrahydrofolate dehydrogenase/cyclohydrolase family. Homodimer.

The enzyme catalyses (6R)-5,10-methylene-5,6,7,8-tetrahydrofolate + NADP(+) = (6R)-5,10-methenyltetrahydrofolate + NADPH. It catalyses the reaction (6R)-5,10-methenyltetrahydrofolate + H2O = (6R)-10-formyltetrahydrofolate + H(+). Its pathway is one-carbon metabolism; tetrahydrofolate interconversion. Its function is as follows. Catalyzes the oxidation of 5,10-methylenetetrahydrofolate to 5,10-methenyltetrahydrofolate and then the hydrolysis of 5,10-methenyltetrahydrofolate to 10-formyltetrahydrofolate. This Aliarcobacter butzleri (strain RM4018) (Arcobacter butzleri) protein is Bifunctional protein FolD.